Reading from the N-terminus, the 161-residue chain is SsrA-binding protein (161 aa).

It belongs to the SmpB family.

It is found in the cytoplasm. Functionally, required for rescue of stalled ribosomes mediated by trans-translation. Binds to transfer-messenger RNA (tmRNA), required for stable association of tmRNA with ribosomes. tmRNA and SmpB together mimic tRNA shape, replacing the anticodon stem-loop with SmpB. tmRNA is encoded by the ssrA gene; the 2 termini fold to resemble tRNA(Ala) and it encodes a 'tag peptide', a short internal open reading frame. During trans-translation Ala-aminoacylated tmRNA acts like a tRNA, entering the A-site of stalled ribosomes, displacing the stalled mRNA. The ribosome then switches to translate the ORF on the tmRNA; the nascent peptide is terminated with the 'tag peptide' encoded by the tmRNA and targeted for degradation. The ribosome is freed to recommence translation, which seems to be the essential function of trans-translation. This is SsrA-binding protein from Baumannia cicadellinicola subsp. Homalodisca coagulata.